The sequence spans 655 residues: SRSF protein kinase 1 (655 aa).

The disordered stretch occupies residues 1–57; that stretch reads MERKVLALQARKKRTKAKKDKAQRKPETQHRGSAPHSESDLPEQEEEILGSDDDEQE. A compositionally biased stretch (basic residues) spans 10 to 22; it reads ARKKRTKAKKDKA. Residues 40-57 are compositionally biased toward acidic residues; sequence DLPEQEEEILGSDDDEQE. Phosphoserine; by CK2 is present on Ser51. Residues 80 to 653 enclose the Protein kinase domain; it reads YHVIRKLGWG…AAECLRHPWL (574 aa). Residues 86-94 and Lys109 contribute to the ATP site; that span reads LGWGHFSTV. Asp213 acts as the Proton acceptor in catalysis. 2 disordered regions span residues 238 to 341 and 397 to 417; these read WQRS…QDQT and FLSS…CTPI. Over residues 265–276 the composition is skewed to basic residues; the sequence is KNKKKKLKKKQK. Basic and acidic residues-rich tracts occupy residues 277-288 and 304-318; these read RQAELLEKRMQE and NKQE…RPLK. Phosphoserine is present on residues Ser309, Ser311, and Ser333. Ser555 is modified (phosphoserine; by CK2).

The protein belongs to the protein kinase superfamily. CMGC Ser/Thr protein kinase family. In terms of assembly, monomer. Found in a multisubunit complex containing seven proteins, named toposome, which separates entangled circular chromatin DNA during chromosome segregation. Interacts with HHV-1 ICP27 protein. Interacts with DNAJC8 and AHSA1/AHA1 and this mediates formation of a complex with the Hsp70 /Hsp90 machinery. Binds to IGF2BP1, SYNCRIP, HNRNPA2B1 and HNRNPC. Interacts with SAFB/SAFB1 and SAFB2 which inhibits its activity. It depends on Mg(2+) as a cofactor.

It is found in the cytoplasm. It localises to the nucleus. The protein resides in the nucleoplasm. Its subcellular location is the nucleus matrix. The protein localises to the microsome. It is found in the nucleus speckle. It localises to the chromosome. The catalysed reaction is L-seryl-[protein] + ATP = O-phospho-L-seryl-[protein] + ADP + H(+). It carries out the reaction L-threonyl-[protein] + ATP = O-phospho-L-threonyl-[protein] + ADP + H(+). Its activity is regulated as follows. Activated by phosphorylation on Ser-51 and Ser-555. Functionally, serine/arginine-rich protein-specific kinase which specifically phosphorylates its substrates at serine residues located in regions rich in arginine/serine dipeptides, known as RS domains and is involved in the phosphorylation of SR splicing factors and the regulation of splicing. Plays a central role in the regulatory network for splicing, controlling the intranuclear distribution of splicing factors in interphase cells and the reorganization of nuclear speckles during mitosis. Can influence additional steps of mRNA maturation, as well as other cellular activities, such as chromatin reorganization in somatic and sperm cells and cell cycle progression. Phosphorylates SFRS2, ZRSR2, LBR and PRM1. Phosphorylates SRSF1 using a directional (C-terminal to N-terminal) and a dual-track mechanism incorporating both processive phosphorylation (in which the kinase stays attached to the substrate after each round of phosphorylation) and distributive phosphorylation steps (in which the kinase and substrate dissociate after each phosphorylation event). The RS domain of SRSF1 binds first to a docking groove in the large lobe of the kinase domain of SRPK1. This induces certain structural changes in SRPK1 and/or RRM2 domain of SRSF1, allowing RRM2 to bind the kinase and initiate phosphorylation. The cycles continue for several phosphorylation steps in a processive manner (steps 1-8) until the last few phosphorylation steps (approximately steps 9-12). During that time, a mechanical stress induces the unfolding of the beta-4 motif in RRM2, which then docks at the docking groove of SRPK1. This also signals RRM2 to begin to dissociate, which facilitates SRSF1 dissociation after phosphorylation is completed. Can mediate hepatitis B virus (HBV) core protein phosphorylation. It plays a negative role in the regulation of HBV replication through a mechanism not involving the phosphorylation of the core protein but by reducing the packaging efficiency of the pregenomic RNA (pgRNA) without affecting the formation of the viral core particles. Can induce splicing of exon 10 in MAPT/TAU. The protein is SRSF protein kinase 1 of Pongo abelii (Sumatran orangutan).